A 422-amino-acid chain; its full sequence is MENWNKYIPEGMKDILFEESNIKLNIEDQLRKIYKYSGFSEIISPTIEFYDVFNSNIQAIPQEKMYKLFDNLGRILVLRPDMTTPIGRITGTKMKDCTYPLKLCYTANIFRVNEKLNGKRGEITQSGIEIIGTNGIKSDVDSIVTAINTLLSLGLKNFKIELGEAGFFQALTENMEIKEENLKKLKEIIRNKNYVALKKFLDEISSKYSKEDFELIKNLPKLFGDIKIIEKAKALTKNKKALKSLDDIYNIYKSIENIGLEAYISIDLGMVQNIDYYTGVIFKGYVEEVGDSILSGGRYDNLIQHFGIELPATGFAINVDDIMIALKKQNTMSMDKDKKVLIFYKEEFLRKAYDFMQELKMKKIICELSLLDDDKEILLYSKKKGIDFIIGFMGEEKLFVKDLKSDKIAFLKKDEIENLLML.

The protein belongs to the class-II aminoacyl-tRNA synthetase family. HisZ subfamily. As to quaternary structure, heteromultimer composed of HisG and HisZ subunits.

The protein localises to the cytoplasm. Its pathway is amino-acid biosynthesis; L-histidine biosynthesis; L-histidine from 5-phospho-alpha-D-ribose 1-diphosphate: step 1/9. Its function is as follows. Required for the first step of histidine biosynthesis. May allow the feedback regulation of ATP phosphoribosyltransferase activity by histidine. This is ATP phosphoribosyltransferase regulatory subunit from Clostridium botulinum (strain Langeland / NCTC 10281 / Type F).